A 116-amino-acid polypeptide reads, in one-letter code: Ribosome-binding factor A (116 aa).

Belongs to the RbfA family. Monomer. Binds 30S ribosomal subunits, but not 50S ribosomal subunits or 70S ribosomes.

Its subcellular location is the cytoplasm. Its function is as follows. One of several proteins that assist in the late maturation steps of the functional core of the 30S ribosomal subunit. Associates with free 30S ribosomal subunits (but not with 30S subunits that are part of 70S ribosomes or polysomes). Required for efficient processing of 16S rRNA. May interact with the 5'-terminal helix region of 16S rRNA. The chain is Ribosome-binding factor A from Streptococcus pyogenes serotype M28 (strain MGAS6180).